The chain runs to 316 residues: Large ribosomal subunit protein uL10 (316 aa).

The disordered stretch occupies residues 282 to 316 (ASAAKADEPKKEEAKKVEEEEEEEEDGFMGFGMFD). Residues 286 to 299 (KADEPKKEEAKKVE) show a composition bias toward basic and acidic residues.

The protein belongs to the universal ribosomal protein uL10 family. In terms of assembly, P0 forms a pentameric complex by interaction with dimers of P1 and P2. In terms of processing, phosphorylated.

Its function is as follows. Ribosomal protein P0 is the functional equivalent of E.coli protein L10. The sequence is that of Large ribosomal subunit protein uL10 (RPLP0) from Plasmodium falciparum (isolate 7G8).